The sequence spans 431 residues: Glutamate-1-semialdehyde 2,1-aminomutase 2 (431 aa).

The residue at position 268 (lysine 268) is an N6-(pyridoxal phosphate)lysine.

The protein belongs to the class-III pyridoxal-phosphate-dependent aminotransferase family. HemL subfamily. In terms of assembly, homodimer. Pyridoxal 5'-phosphate serves as cofactor.

The protein localises to the cytoplasm. It catalyses the reaction (S)-4-amino-5-oxopentanoate = 5-aminolevulinate. It participates in porphyrin-containing compound metabolism; protoporphyrin-IX biosynthesis; 5-aminolevulinate from L-glutamyl-tRNA(Glu): step 2/2. The protein is Glutamate-1-semialdehyde 2,1-aminomutase 2 of Bacillus licheniformis (strain ATCC 14580 / DSM 13 / JCM 2505 / CCUG 7422 / NBRC 12200 / NCIMB 9375 / NCTC 10341 / NRRL NRS-1264 / Gibson 46).